Reading from the N-terminus, the 122-residue chain is MIQMQTNLDVADNSGARRVMCIKVLGGSKRKYASVGDIIVVSIKEAIPRGRVKKGDVMKAVVVRTAKDIRRPDGSVIRFDKNAAVLVDNKKEPIGTRIFGPVPRELRAKNHMKIISLAPEVL.

This sequence belongs to the universal ribosomal protein uL14 family. In terms of assembly, part of the 50S ribosomal subunit. Forms a cluster with proteins L3 and L19. In the 70S ribosome, L14 and L19 interact and together make contacts with the 16S rRNA in bridges B5 and B8.

In terms of biological role, binds to 23S rRNA. Forms part of two intersubunit bridges in the 70S ribosome. The chain is Large ribosomal subunit protein uL14 from Mesorhizobium japonicum (strain LMG 29417 / CECT 9101 / MAFF 303099) (Mesorhizobium loti (strain MAFF 303099)).